Reading from the N-terminus, the 98-residue chain is NADH-ubiquinone oxidoreductase chain 4L (98 aa).

A run of 3 helical transmembrane segments spans residues 2 to 22 (PSISINITLAFTAALLGMLMF), 29 to 49 (SLLCLEGMMLSMFILSTLIIL), and 61 to 81 (ILLLVFAACEAAIGLALLVMV).

This sequence belongs to the complex I subunit 4L family. Core subunit of respiratory chain NADH dehydrogenase (Complex I) which is composed of 45 different subunits.

The protein localises to the mitochondrion inner membrane. It catalyses the reaction a ubiquinone + NADH + 5 H(+)(in) = a ubiquinol + NAD(+) + 4 H(+)(out). Core subunit of the mitochondrial membrane respiratory chain NADH dehydrogenase (Complex I) which catalyzes electron transfer from NADH through the respiratory chain, using ubiquinone as an electron acceptor. Part of the enzyme membrane arm which is embedded in the lipid bilayer and involved in proton translocation. The sequence is that of NADH-ubiquinone oxidoreductase chain 4L (MT-ND4L) from Microcebus griseorufus (Gray-brown mouse lemur).